Consider the following 341-residue polypeptide: UPF0324 membrane protein SMU_2059c (341 aa).

11 helical membrane-spanning segments follow: residues 7-24 (KLSG…AWFL), 28-47 (FPLV…LAIF), 68-85 (FAVV…VLTV), 90-107 (LPII…AFLL), 120-142 (LVGV…VIQA), 147-169 (IAQS…PTLG), 178-200 (GFAL…AAAW), 211-233 (GATI…LSFY), 254-276 (VFPM…TALG), 291-310 (FCIV…VKLV), and 317-339 (IVLG…HLLG).

It belongs to the UPF0324 family.

The protein localises to the cell membrane. This chain is UPF0324 membrane protein SMU_2059c, found in Streptococcus mutans serotype c (strain ATCC 700610 / UA159).